The sequence spans 295 residues: Probable CBASS effector molecule IK1_05631 (295 aa).

4 helical membrane-spanning segments follow: residues 26 to 46 (IFYA…ISIY), 56 to 76 (SNTG…AYQI), 167 to 187 (ILLF…GFFV), and 190 to 210 (SMQE…IYGF).

It localises to the cell membrane. Functionally, effector protein of a CBASS antiviral system. CBASS (cyclic oligonucleotide-based antiphage signaling system) provides immunity against bacteriophage. The CD-NTase protein synthesizes cyclic nucleotides in response to infection; these serve as specific second messenger signals. The signals activate a diverse range of effectors, leading to bacterial cell death and thus abortive phage infection. A type I-B CBASS system. Protects B.subtilis against phage infection. When IK1_05630 and IK1_05631 are introduced in B.subtilis BEST7003 there is 1000-fold protection against phage SBSphiC. Both genes are required for protection. Activation leads to bacterial cell lysis and death, which occurs before the phage has finished its replication cycle, thus protecting non-infected bacteria by aborting the phage infection and preventing its propagation. In Bacillus cereus (strain VD146), this protein is Probable CBASS effector molecule IK1_05631.